Consider the following 321-residue polypeptide: NADH-ubiquinone oxidoreductase chain 1 (321 aa).

The next 8 membrane-spanning stretches (helical) occupy residues 2 to 22 (LVML…VAFL), 71 to 91 (ALFI…WMFI), 104 to 124 (LLVI…SGWA), 148 to 168 (LGLI…QAFI), 173 to 193 (HTWF…STLA), 224 to 244 (LFFL…AIMF), 255 to 275 (ILPI…FLWI), and 295 to 315 (FLPL…SLGG).

The protein belongs to the complex I subunit 1 family.

Its subcellular location is the mitochondrion inner membrane. The enzyme catalyses a ubiquinone + NADH + 5 H(+)(in) = a ubiquinol + NAD(+) + 4 H(+)(out). Its function is as follows. Core subunit of the mitochondrial membrane respiratory chain NADH dehydrogenase (Complex I) that is believed to belong to the minimal assembly required for catalysis. Complex I functions in the transfer of electrons from NADH to the respiratory chain. The immediate electron acceptor for the enzyme is believed to be ubiquinone. This chain is NADH-ubiquinone oxidoreductase chain 1 (MT-ND1), found in Lampetra fluviatilis (European river lamprey).